We begin with the raw amino-acid sequence, 455 residues long: Kynurenine 3-monooxygenase (455 aa).

It belongs to the aromatic-ring hydroxylase family. KMO subfamily. FAD serves as cofactor.

It carries out the reaction L-kynurenine + NADPH + O2 + H(+) = 3-hydroxy-L-kynurenine + NADP(+) + H2O. The protein operates within cofactor biosynthesis; NAD(+) biosynthesis; quinolinate from L-kynurenine: step 1/3. Catalyzes the hydroxylation of L-kynurenine (L-Kyn) to form 3-hydroxy-L-kynurenine (L-3OHKyn). Required for synthesis of quinolinic acid. This Stenotrophomonas maltophilia (strain K279a) protein is Kynurenine 3-monooxygenase.